Consider the following 1299-residue polypeptide: Phosphoribosylformylglycinamidine synthase (1299 aa).

ATP is bound by residues 310 to 321 (GAATGAGGEIRD), 389 to 391 (TGY), and Ala-680. Mg(2+) contacts are provided by Asp-681, Glu-720, Asn-724, and Asp-888. Ser-890 serves as a coordination point for ATP. In terms of domain architecture, Glutamine amidotransferase type-1 spans 1046–1299 (VAVLREQGVN…MFRNARVWLG (254 aa)). Catalysis depends on Cys-1139, which acts as the Nucleophile. Active-site residues include His-1264 and Glu-1266.

This sequence in the N-terminal section; belongs to the FGAMS family. As to quaternary structure, monomer.

The protein resides in the cytoplasm. It catalyses the reaction N(2)-formyl-N(1)-(5-phospho-beta-D-ribosyl)glycinamide + L-glutamine + ATP + H2O = 2-formamido-N(1)-(5-O-phospho-beta-D-ribosyl)acetamidine + L-glutamate + ADP + phosphate + H(+). It participates in purine metabolism; IMP biosynthesis via de novo pathway; 5-amino-1-(5-phospho-D-ribosyl)imidazole from N(2)-formyl-N(1)-(5-phospho-D-ribosyl)glycinamide: step 1/2. In terms of biological role, phosphoribosylformylglycinamidine synthase involved in the purines biosynthetic pathway. Catalyzes the ATP-dependent conversion of formylglycinamide ribonucleotide (FGAR) and glutamine to yield formylglycinamidine ribonucleotide (FGAM) and glutamate. The sequence is that of Phosphoribosylformylglycinamidine synthase from Myxococcus xanthus (strain DK1622).